We begin with the raw amino-acid sequence, 268 residues long: Putative cysteine-rich repeat secretory protein 5 (268 aa).

Positions 1–24 are cleaved as a signal peptide; it reads MTGINTHFAVALFCFFSFSLRAMS. Gnk2-homologous domains lie at 27–129 and 135–248; these read SQML…NVSF and DVPS…ISAL.

Belongs to the cysteine-rich repeat secretory protein family.

Its subcellular location is the secreted. This chain is Putative cysteine-rich repeat secretory protein 5 (CRRSP5), found in Arabidopsis thaliana (Mouse-ear cress).